We begin with the raw amino-acid sequence, 454 residues long: Diaminobutyrate--2-oxoglutarate aminotransferase (454 aa).

The residue at position 287 (K287) is an N6-(pyridoxal phosphate)lysine.

This sequence belongs to the class-III pyridoxal-phosphate-dependent aminotransferase family. Requires pyridoxal 5'-phosphate as cofactor.

The enzyme catalyses L-2,4-diaminobutanoate + 2-oxoglutarate = L-aspartate 4-semialdehyde + L-glutamate. The protein operates within amine and polyamine biosynthesis; 1,3-diaminopropane biosynthesis; 1,3-diaminopropane from L-aspartate 4-semialdehyde: step 1/2. The protein is Diaminobutyrate--2-oxoglutarate aminotransferase (dat) of Haemophilus influenzae (strain ATCC 51907 / DSM 11121 / KW20 / Rd).